Consider the following 357-residue polypeptide: DNA replication and repair protein RecF (357 aa).

31–38 contacts ATP; the sequence is GQNGAGKT.

Belongs to the RecF family.

The protein resides in the cytoplasm. Its function is as follows. The RecF protein is involved in DNA metabolism; it is required for DNA replication and normal SOS inducibility. RecF binds preferentially to single-stranded, linear DNA. It also seems to bind ATP. In Coxiella burnetii (strain Dugway 5J108-111), this protein is DNA replication and repair protein RecF.